A 245-amino-acid polypeptide reads, in one-letter code: 1-(5-phosphoribosyl)-5-[(5-phosphoribosylamino)methylideneamino] imidazole-4-carboxamide isomerase (245 aa).

Residue D8 is the Proton acceptor of the active site. Catalysis depends on D130, which acts as the Proton donor.

This sequence belongs to the HisA/HisF family.

The protein resides in the cytoplasm. It carries out the reaction 1-(5-phospho-beta-D-ribosyl)-5-[(5-phospho-beta-D-ribosylamino)methylideneamino]imidazole-4-carboxamide = 5-[(5-phospho-1-deoxy-D-ribulos-1-ylimino)methylamino]-1-(5-phospho-beta-D-ribosyl)imidazole-4-carboxamide. Its pathway is amino-acid biosynthesis; L-histidine biosynthesis; L-histidine from 5-phospho-alpha-D-ribose 1-diphosphate: step 4/9. This Marinobacter nauticus (strain ATCC 700491 / DSM 11845 / VT8) (Marinobacter aquaeolei) protein is 1-(5-phosphoribosyl)-5-[(5-phosphoribosylamino)methylideneamino] imidazole-4-carboxamide isomerase.